The primary structure comprises 103 residues: Large ribosomal subunit protein bL21 (103 aa).

Belongs to the bacterial ribosomal protein bL21 family. Part of the 50S ribosomal subunit. Contacts protein L20.

This protein binds to 23S rRNA in the presence of protein L20. The sequence is that of Large ribosomal subunit protein bL21 from Acidovorax sp. (strain JS42).